A 161-amino-acid polypeptide reads, in one-letter code: Epoxidase gkaX (161 aa).

The first 18 residues, 1-18 (MSLSTSLRLLRLLPAISS), serve as a signal peptide directing secretion. N45 carries N-linked (GlcNAc...) asparagine glycosylation. A run of 3 helical transmembrane segments spans residues 59 to 79 (WQWI…LNLV), 92 to 112 (IWYV…KMAL), and 139 to 159 (WVRA…AAVS).

The protein belongs to the epoxidase xenD family.

It localises to the membrane. The protein operates within mycotoxin biosynthesis. Epoxidase; part of the gene cluster that mediates the biosynthesis of GKK1032, fungal natural products containing a macrocyclic para-cyclophane connected to a decahydrofluorene ring system that show potent antitumor activities. Within the pathway, gkaX functions synergistically with gkaB and gkaZ to form the cyclophane. The pathway begins with the PKS-NRPS gkaA which, with the help of the trans-enoyl reductase gkaC, synthesizes the polyketide-tyrosyl acyl thioester product which can be reductively off-loaded by the terminal reductase (R) domain in gkaA. The alpha/beta hydrolase gkaG is then required to catalyze the subsequent Knoevenagel condensation that affords the 3-pyrrolin-2-one ring, whereas the three proteins gkaB, gkaX and gkaZ then function synergistically to form the cyclophane. This chain is Epoxidase gkaX, found in Penicillium citrinum.